Reading from the N-terminus, the 581-residue chain is Terpene synthase 2, chloroplastic (581 aa).

Residues 1–34 (MYSLPGATMSAAPASIISSSSFVEPLLLAAASPA) constitute a chloroplast transit peptide. The substrate site is built by Arg-299, Asp-336, Asp-340, and Arg-480. Mg(2+)-binding residues include Asp-336 and Asp-340. The DDXXD motif signature appears at 336 to 340 (DDIFD). Residues Asp-483, Ser-487, and Glu-491 each contribute to the Mg(2+) site.

This sequence belongs to the terpene synthase family. In terms of assembly, monomer. The cofactor is Mg(2+).

The protein localises to the plastid. Its subcellular location is the chloroplast. The enzyme catalyses (2E,6E)-farnesyl diphosphate + H2O = (3S,6E)-nerolidol + diphosphate. It catalyses the reaction (2E,6E,10E)-geranylgeranyl diphosphate + H2O = (6E,10E)-geranyllinalool + diphosphate. The catalysed reaction is (2E)-geranyl diphosphate + H2O = (S)-linalool + diphosphate. It participates in secondary metabolite biosynthesis; terpenoid biosynthesis. Functionally, involved in sesquiterpene (C15), diterpene (C20) and monoterpene (C10) biosynthesis. Has sesquiterpene synthase activity, converting farnesyl diphosphate to nerolidol, the precursor of the volatile C11-homoterpene (E)-3,8-dimethyl-1,4,7-nonatriene (DMNT). Has diterpene synthase activity, converting geranylgeranyl diphosphate to (E,E)-geranyllinalool, the precursor of the volatile C16-homoterpene (E,E)-4,8,12-trimethyltrideca 1,3,7,11-tetraene (TMTT). Has monoterpene synthase activity, converting geranyl diphosphate into linalool. Forms only the S-isomers of the three tertiary terpene alcohols. The protein is Terpene synthase 2, chloroplastic of Zea mays (Maize).